The sequence spans 444 residues: Tubulin beta chain (444 aa).

Residues 1–4 carry the MREI motif motif; sequence MREI. GTP is bound by residues Q11, E69, S138, G142, T143, G144, N204, and N226. Residue E69 coordinates Mg(2+). Residues 421-444 are disordered; the sequence is EYQQYQDATAEEEEDFNEEAEEEA. Residues 429 to 444 show a composition bias toward acidic residues; sequence TAEEEEDFNEEAEEEA. At E438 the chain carries 5-glutamyl polyglutamate.

This sequence belongs to the tubulin family. As to quaternary structure, dimer of alpha and beta chains. A typical microtubule is a hollow water-filled tube with an outer diameter of 25 nm and an inner diameter of 15 nM. Alpha-beta heterodimers associate head-to-tail to form protofilaments running lengthwise along the microtubule wall with the beta-tubulin subunit facing the microtubule plus end conferring a structural polarity. Microtubules usually have 13 protofilaments but different protofilament numbers can be found in some organisms and specialized cells. Mg(2+) is required as a cofactor. Some glutamate residues at the C-terminus are polyglycylated, resulting in polyglycine chains on the gamma-carboxyl group. Glycylation is mainly limited to tubulin incorporated into axonemes (cilia and flagella) whereas glutamylation is prevalent in neuronal cells, centrioles, axonemes, and the mitotic spindle. Both modifications can coexist on the same protein on adjacent residues, and lowering polyglycylation levels increases polyglutamylation, and reciprocally. The precise function of polyglycylation is still unclear. Post-translationally, some glutamate residues at the C-terminus are polyglutamylated, resulting in polyglutamate chains on the gamma-carboxyl group. Polyglutamylation plays a key role in microtubule severing by spastin (SPAST). SPAST preferentially recognizes and acts on microtubules decorated with short polyglutamate tails: severing activity by SPAST increases as the number of glutamates per tubulin rises from one to eight, but decreases beyond this glutamylation threshold.

The protein resides in the cytoplasm. Its subcellular location is the cytoskeleton. In terms of biological role, tubulin is the major constituent of microtubules, a cylinder consisting of laterally associated linear protofilaments composed of alpha- and beta-tubulin heterodimers. Microtubules grow by the addition of GTP-tubulin dimers to the microtubule end, where a stabilizing cap forms. Below the cap, tubulin dimers are in GDP-bound state, owing to GTPase activity of alpha-tubulin. In Xenopus laevis (African clawed frog), this protein is Tubulin beta chain (tubb).